An 839-amino-acid polypeptide reads, in one-letter code: Conserved oligomeric Golgi complex subunit 6 (839 aa).

Residues 14 to 38 (DTATPELPEPEPRLNLTSDAQSQPT) form a disordered region.

It belongs to the COG6 family. Component of the conserved oligomeric Golgi (COG or Sec34/Sec35) complex which consists of eight different proteins COG1-COG8.

Its subcellular location is the golgi apparatus membrane. Acts as a component of the peripheral membrane COG complex that is involved in intra-Golgi protein trafficking. COG is located at the cis-Golgi, and regulates tethering of retrograde intra-Golgi vesicles and possibly a number of other membrane trafficking events. The protein is Conserved oligomeric Golgi complex subunit 6 (COG6) of Saccharomyces cerevisiae (strain ATCC 204508 / S288c) (Baker's yeast).